We begin with the raw amino-acid sequence, 466 residues long: Ribulose bisphosphate carboxylase large chain (466 aa).

At lysine 5 the chain carries N6,N6,N6-trimethyllysine. Substrate-binding residues include asparagine 114 and threonine 164. The active-site Proton acceptor is the lysine 166. A substrate-binding site is contributed by lysine 168. Mg(2+) contacts are provided by lysine 192, aspartate 194, and glutamate 195. Position 192 is an N6-carboxylysine (lysine 192). The Proton acceptor role is filled by histidine 285. Residues arginine 286, histidine 318, and serine 370 each contribute to the substrate site.

This sequence belongs to the RuBisCO large chain family. Type I subfamily. In terms of assembly, heterohexadecamer of 8 large chains and 8 small chains; disulfide-linked. The disulfide link is formed within the large subunit homodimers. The cofactor is Mg(2+). The disulfide bond which can form in the large chain dimeric partners within the hexadecamer appears to be associated with oxidative stress and protein turnover.

Its subcellular location is the plastid. It is found in the chloroplast. It carries out the reaction 2 (2R)-3-phosphoglycerate + 2 H(+) = D-ribulose 1,5-bisphosphate + CO2 + H2O. It catalyses the reaction D-ribulose 1,5-bisphosphate + O2 = 2-phosphoglycolate + (2R)-3-phosphoglycerate + 2 H(+). In terms of biological role, ruBisCO catalyzes two reactions: the carboxylation of D-ribulose 1,5-bisphosphate, the primary event in carbon dioxide fixation, as well as the oxidative fragmentation of the pentose substrate in the photorespiration process. Both reactions occur simultaneously and in competition at the same active site. The chain is Ribulose bisphosphate carboxylase large chain from Adoxa moschatellina (Moschatel).